The sequence spans 404 residues: Serine/threonine transporter SstT (404 aa).

The next 8 helical transmembrane spans lie at 17-37 (IGIG…LTGF), 39-59 (ILGK…VFAL), 75-95 (MTLI…VAVL), 138-158 (ALAT…GLAL), 179-199 (IVVW…FTTI), 212-232 (FLIL…NPLI), 287-307 (IPLG…VLTL), and 313-333 (FGIP…AVSA).

It belongs to the dicarboxylate/amino acid:cation symporter (DAACS) (TC 2.A.23) family.

The protein resides in the cell membrane. The enzyme catalyses L-serine(in) + Na(+)(in) = L-serine(out) + Na(+)(out). It catalyses the reaction L-threonine(in) + Na(+)(in) = L-threonine(out) + Na(+)(out). Its function is as follows. Involved in the import of serine and threonine into the cell, with the concomitant import of sodium (symport system). In Streptococcus pyogenes serotype M5 (strain Manfredo), this protein is Serine/threonine transporter SstT.